The following is a 505-amino-acid chain: ATP synthase subunit alpha (505 aa).

Position 170–177 (glycine 170–threonine 177) interacts with ATP.

The protein belongs to the ATPase alpha/beta chains family. In terms of assembly, F-type ATPases have 2 components, CF(1) - the catalytic core - and CF(0) - the membrane proton channel. CF(1) has five subunits: alpha(3), beta(3), gamma(1), delta(1), epsilon(1). CF(0) has four main subunits: a, b, b' and c.

The protein resides in the cellular thylakoid membrane. It catalyses the reaction ATP + H2O + 4 H(+)(in) = ADP + phosphate + 5 H(+)(out). In terms of biological role, produces ATP from ADP in the presence of a proton gradient across the membrane. The alpha chain is a regulatory subunit. This is ATP synthase subunit alpha from Cyanothece sp. (strain PCC 7425 / ATCC 29141).